We begin with the raw amino-acid sequence, 515 residues long: 2-isopropylmalate synthase (515 aa).

In terms of domain architecture, Pyruvate carboxyltransferase spans 4-266 (INIFDTTLRD…ETRLNLQEIK (263 aa)). Mn(2+) is bound by residues Asp13, His201, His203, and Asn237. Positions 391–515 (QLSSLQVQYG…RAENQKVAMQ (125 aa)) are regulatory domain.

This sequence belongs to the alpha-IPM synthase/homocitrate synthase family. LeuA type 1 subfamily. In terms of assembly, homodimer. Mn(2+) serves as cofactor.

It is found in the cytoplasm. The enzyme catalyses 3-methyl-2-oxobutanoate + acetyl-CoA + H2O = (2S)-2-isopropylmalate + CoA + H(+). The protein operates within amino-acid biosynthesis; L-leucine biosynthesis; L-leucine from 3-methyl-2-oxobutanoate: step 1/4. Functionally, catalyzes the condensation of the acetyl group of acetyl-CoA with 3-methyl-2-oxobutanoate (2-ketoisovalerate) to form 3-carboxy-3-hydroxy-4-methylpentanoate (2-isopropylmalate). This Geobacillus sp. (strain WCH70) protein is 2-isopropylmalate synthase.